A 693-amino-acid chain; its full sequence is Putative adenosylcobalamin-dependent ribonucleoside-triphosphate reductase (693 aa).

A disulfide bridge connects residues C90 and C386. Active-site residues include C375 and E377.

This sequence belongs to the class II ribonucleoside-triphosphate reductase family. It depends on adenosylcob(III)alamin as a cofactor.

The catalysed reaction is a 2'-deoxyribonucleoside 5'-triphosphate + [thioredoxin]-disulfide + H2O = a ribonucleoside 5'-triphosphate + [thioredoxin]-dithiol. The sequence is that of Putative adenosylcobalamin-dependent ribonucleoside-triphosphate reductase (50) from Mycobacterium phage D29 (Mycobacteriophage D29).